Here is a 383-residue protein sequence, read N- to C-terminus: Protein pelota homolog (383 aa).

It belongs to the eukaryotic release factor 1 family. Pelota subfamily. Component of the Pelota-HBS1L complex, also named Dom34-Hbs1 complex, composed of PELO and HBS1L. Requires a divalent metal cation as cofactor.

Its subcellular location is the cytoplasm. Functionally, component of the Pelota-HBS1L complex, a complex that recognizes stalled ribosomes and triggers the No-Go Decay (NGD) pathway. In the Pelota-HBS1L complex, PELO recognizes ribosomes stalled at the 3' end of an mRNA and engages stalled ribosomes by destabilizing mRNA in the mRNA channel. Following mRNA extraction from stalled ribosomes by the SKI complex, the Pelota-HBS1L complex promotes recruitment of ABCE1, which drives the disassembly of stalled ribosomes, followed by degradation of damaged mRNAs as part of the NGD pathway. In Xenopus laevis (African clawed frog), this protein is Protein pelota homolog (pelo).